We begin with the raw amino-acid sequence, 443 residues long: D-alanyl-D-alanine carboxypeptidase DacA (443 aa).

The first 31 residues, 1-31, serve as a signal peptide directing secretion; sequence MNIKKCKQLLMSLVVLTLAVTCLAPMSKAKA. Catalysis depends on serine 67, which acts as the Acyl-ester intermediate. The active-site Proton acceptor is lysine 70. Serine 131 is a catalytic residue. Substrate is bound at residue lysine 258.

This sequence belongs to the peptidase S11 family.

Its subcellular location is the secreted. The protein localises to the cell wall. It localises to the cell membrane. It is found in the membrane raft. It carries out the reaction Preferential cleavage: (Ac)2-L-Lys-D-Ala-|-D-Ala. Also transpeptidation of peptidyl-alanyl moieties that are N-acyl substituents of D-alanine.. Its pathway is cell wall biogenesis; peptidoglycan biosynthesis. Functionally, removes C-terminal D-alanyl residues from sugar-peptide cell wall precursors. This chain is D-alanyl-D-alanine carboxypeptidase DacA (dacA), found in Bacillus subtilis (strain 168).